The chain runs to 372 residues: Spermidine/putrescine import ATP-binding protein PotA (372 aa).

The ABC transporter domain maps to 11 to 241 (IELRSIKKSY…PANLFVARFI (231 aa)). 43 to 50 (GPSGCGKT) is a binding site for ATP.

Belongs to the ABC transporter superfamily. Spermidine/putrescine importer (TC 3.A.1.11.1) family. The complex is composed of two ATP-binding proteins (PotA), two transmembrane proteins (PotB and PotC) and a solute-binding protein (PotD).

The protein resides in the cell inner membrane. It catalyses the reaction ATP + H2O + polyamine-[polyamine-binding protein]Side 1 = ADP + phosphate + polyamineSide 2 + [polyamine-binding protein]Side 1.. In terms of biological role, part of the ABC transporter complex PotABCD involved in spermidine/putrescine import. Responsible for energy coupling to the transport system. This chain is Spermidine/putrescine import ATP-binding protein PotA, found in Haemophilus influenzae (strain 86-028NP).